The chain runs to 370 residues: 3-isopropylmalate dehydrogenase (370 aa).

4 residues coordinate substrate: arginine 99, arginine 109, arginine 137, and aspartate 227. Mg(2+) is bound by residues aspartate 227, aspartate 251, and aspartate 255. Position 290–302 (290–302) interacts with NAD(+); it reads GSAPDIAGQDKAN.

This sequence belongs to the isocitrate and isopropylmalate dehydrogenases family. LeuB type 1 subfamily. As to quaternary structure, homodimer. Mg(2+) is required as a cofactor. It depends on Mn(2+) as a cofactor.

It is found in the cytoplasm. It catalyses the reaction (2R,3S)-3-isopropylmalate + NAD(+) = 4-methyl-2-oxopentanoate + CO2 + NADH. It functions in the pathway amino-acid biosynthesis; L-leucine biosynthesis; L-leucine from 3-methyl-2-oxobutanoate: step 3/4. Functionally, catalyzes the oxidation of 3-carboxy-2-hydroxy-4-methylpentanoate (3-isopropylmalate) to 3-carboxy-4-methyl-2-oxopentanoate. The product decarboxylates to 4-methyl-2 oxopentanoate. This chain is 3-isopropylmalate dehydrogenase, found in Rhodospirillum rubrum (strain ATCC 11170 / ATH 1.1.1 / DSM 467 / LMG 4362 / NCIMB 8255 / S1).